The following is a 289-amino-acid chain: Thymidylate synthase (289 aa).

DUMP-binding positions include arginine 26 and 151–152; that span reads RR. Cysteine 171 serves as the catalytic Nucleophile. Residues 191–194, asparagine 202, and 232–234 contribute to the dUMP site; these read RSGD and HVY. Position 194 (aspartate 194) interacts with (6R)-5,10-methylene-5,6,7,8-tetrahydrofolate. Alanine 288 lines the (6R)-5,10-methylene-5,6,7,8-tetrahydrofolate pocket.

This sequence belongs to the thymidylate synthase family. Homodimer.

The enzyme catalyses dUMP + (6R)-5,10-methylene-5,6,7,8-tetrahydrofolate = 7,8-dihydrofolate + dTMP. The protein operates within pyrimidine metabolism; dTTP biosynthesis. In Equus caballus (Horse), this protein is Thymidylate synthase.